Here is a 455-residue protein sequence, read N- to C-terminus: Chromosomal replication initiator protein DnaA (455 aa).

The tract at residues 1–75 (MLERNDLWNL…AMQATNEQIR (75 aa)) is domain I, interacts with DnaA modulators. The segment at 75–117 (RPVMITEEERQQLTRDKDSQVTTGNVAGQQPTTATTPTFMRET) is domain II. A compositionally biased stretch (basic and acidic residues) spans 84–93 (RQQLTRDKDS). Positions 84–107 (RQQLTRDKDSQVTTGNVAGQQPTT) are disordered. Residues 118-334 (KLNPKYTFDT…GALARVQAYS (217 aa)) form a domain III, AAA+ region region. Residues Gly162, Gly164, Lys165, and Thr166 each contribute to the ATP site. The tract at residues 335-455 (RLNNSPITTS…VGDLTGQLKS (121 aa)) is domain IV, binds dsDNA.

It belongs to the DnaA family. Oligomerizes as a right-handed, spiral filament on DNA at oriC.

The protein resides in the cytoplasm. Its function is as follows. Plays an essential role in the initiation and regulation of chromosomal replication. ATP-DnaA binds to the origin of replication (oriC) to initiate formation of the DNA replication initiation complex once per cell cycle. Binds the DnaA box (a 9 base pair repeat at the origin) and separates the double-stranded (ds)DNA. Forms a right-handed helical filament on oriC DNA; dsDNA binds to the exterior of the filament while single-stranded (ss)DNA is stabiized in the filament's interior. The ATP-DnaA-oriC complex binds and stabilizes one strand of the AT-rich DNA unwinding element (DUE), permitting loading of DNA polymerase. After initiation quickly degrades to an ADP-DnaA complex that is not apt for DNA replication. Binds acidic phospholipids. The chain is Chromosomal replication initiator protein DnaA from Lactiplantibacillus plantarum (strain ATCC BAA-793 / NCIMB 8826 / WCFS1) (Lactobacillus plantarum).